A 653-amino-acid polypeptide reads, in one-letter code: Choline transporter-like protein 1 (653 aa).

Glycine 2 carries N-myristoyl glycine lipidation. Residues 2–29 are Cytoplasmic-facing; it reads GCCSSASAAQSSKREWKPLEDRSCTDIP. A helical transmembrane segment spans residues 30 to 50; that stretch reads WLLLFVLFCIGMGFICGFSVA. At 51-211 the chain is on the mitochondrial intermembrane side; the sequence is TGAAARLVSG…RLISGVMTSK (161 aa). A helical membrane pass occupies residues 212–232; that stretch reads EIILGLCLLSLVLSMILMVII. The Cytoplasmic segment spans residues 233–237; it reads RYISR. The helical transmembrane segment at 238–258 threads the bilayer; the sequence is VLVWILTVLVILGSLGGTGVL. At 259 to 287 the chain is on the mitochondrial intermembrane side; it reads WWLYAKQRRSPKEAVIPEQLQIAEDNLRA. A helical membrane pass occupies residues 288–308; it reads LLIYAISATVFTVILFLIMLV. The Cytoplasmic portion of the chain corresponds to 309 to 314; the sequence is MRKRVA. The helical transmembrane segment at 315 to 335 threads the bilayer; the sequence is LTIALFHVAGKVFIHLPLLVF. The Mitochondrial intermembrane segment spans residues 336–337; the sequence is QP. A helical membrane pass occupies residues 338–358; that stretch reads FWTFFALVLFWAYWIMTLLFL. The Cytoplasmic portion of the chain corresponds to 359-379; it reads GTTGSAVQNEQGFVEYKISGP. Residues 380-400 form a helical membrane-spanning segment; it reads LQYMWWYHVVGLIWISEFILA. Residues 401–536 lie on the Mitochondrial intermembrane side of the membrane; that stretch reads CQQMTVAGAV…RVAAINTVGD (136 aa). The chain crosses the membrane as a helical span at residues 537 to 557; sequence FMLFLGKVLIVCSTGLAGIML. Topologically, residues 558 to 565 are cytoplasmic; the sequence is LNYQQDYT. Residues 566–586 form a helical membrane-spanning segment; it reads VWVLPLIIVCLFAFLVAHCFL. The Mitochondrial intermembrane portion of the chain corresponds to 587–653; it reads SIYEMVVDVL…RELKPMLRKR (67 aa).

The protein belongs to the CTL (choline transporter-like) family. As to expression, specifically abundant in skeletal muscle (at protein level).

The protein resides in the cell membrane. It localises to the mitochondrion outer membrane. The catalysed reaction is choline(out) + n H(+)(in) = choline(in) + n H(+)(out). It carries out the reaction ethanolamine(out) + n H(+)(in) = ethanolamine(in) + n H(+)(out). Functionally, choline/H+ antiporter. Also acts as a high-affinity ethanolamine/H+ antiporter, regulating the supply of extracellular ethanolamine (Etn) for the CDP-Etn pathway, redistribute intracellular Etn and balance the CDP-Cho and CDP-Etn arms of the Kennedy pathway. Involved in membrane synthesis and myelin production. This is Choline transporter-like protein 1 (Slc44a1) from Mus musculus (Mouse).